The primary structure comprises 319 residues: tRNA uridine(34) hydroxylase (319 aa).

Positions 127–221 constitute a Rhodanese domain; that stretch reads KQEDTVIIDA…YGKDPEVQGE (95 aa). The active-site Cysteine persulfide intermediate is the C181.

It belongs to the TrhO family.

It carries out the reaction uridine(34) in tRNA + AH2 + O2 = 5-hydroxyuridine(34) in tRNA + A + H2O. Catalyzes oxygen-dependent 5-hydroxyuridine (ho5U) modification at position 34 in tRNAs. In Bacillus cereus (strain ATCC 10987 / NRS 248), this protein is tRNA uridine(34) hydroxylase.